Reading from the N-terminus, the 1207-residue chain is Histidine kinase 1 (1207 aa).

The span at 1 to 10 (MRGDSFSMSI) shows a compositional bias: polar residues. The tract at residues 1 to 20 (MRGDSFSMSIENLPDSPMGS) is disordered. At 1–81 (MRGDSFSMSI…SSYYSVFVVR (81 aa)) the chain is on the cytoplasmic side. Residues 82–102 (LAIMVMLAILIGLLTVLTWHF) form a helical membrane-spanning segment. Topologically, residues 103 to 446 (TRIYTKQSLQ…GKVDERAFKT (344 aa)) are extracellular. Residues 447 to 467 (LIILISASVCIFFIGCVCILI) traverse the membrane as a helical segment. Over 468-1207 (LTNGVSKEMK…PSAFQTSLSA (740 aa)) the chain is Cytoplasmic. The 259-residue stretch at 505–763 (NMSHELRTPM…LMRLYLILST (259 aa)) folds into the Histidine kinase domain. Phosphohistidine; by autocatalysis is present on His508. Disordered regions lie at residues 964–987 (DTCSSDDSSETSGEKQVDKSVKPS) and 1000–1021 (DATTSNDDSTSASMTQKNPEEE). Residues 975-984 (SGEKQVDKSV) show a composition bias toward basic and acidic residues. A compositionally biased stretch (low complexity) spans 1000 to 1014 (DATTSNDDSTSASMT). The Response regulatory domain maps to 1045–1196 (RILLAEDTPV…LMVSTILSLT (152 aa)). A 4-aspartylphosphate modification is found at Asp1127.

As to quaternary structure, interacts with AHP2, depending of the phosphorylation state of Asp-1075 in the receiver domain, but probably not with AHP1 and AHP3. In terms of processing, autophosphorylated predominantly on His residues. Activation probably requires a transfer of a phosphate group between a His in the transmitter domain and an Asp of the receiver domain. Mostly expressed in roots, and, to a lower extent, in stems, leaves and flowers.

It is found in the cell membrane. The enzyme catalyses ATP + protein L-histidine = ADP + protein N-phospho-L-histidine.. Functionally, functions as an osmosensor histidine kinase that detects water stress and transmits the stress signal to a downstream MAPK cascade. This protein undergoes an ATP-dependent autophosphorylation at a conserved histidine residue in the kinase core, and a phosphoryl group is then transferred to a conserved aspartate residue in the receiver domain. Positive regulator of drought and salt stress responses, and abscisic acid (ABA) signaling. Confers drought tolerance, probably by regulating levels of ABA accumulation. Plays a redundant role in regulating plant growth and development. Required for the regulation of desiccation processes during seed formation. This chain is Histidine kinase 1 (AHK1), found in Arabidopsis thaliana (Mouse-ear cress).